The sequence spans 249 residues: Enolase-phosphatase E1 (249 aa).

Mg(2+) is bound by residues D9 and E11. Substrate is bound by residues 137–138 (SS) and K177. D204 provides a ligand contact to Mg(2+).

This sequence belongs to the HAD-like hydrolase superfamily. MasA/MtnC family. In terms of assembly, monomer. It depends on Mg(2+) as a cofactor.

Its subcellular location is the cytoplasm. The protein localises to the nucleus. It catalyses the reaction 5-methylsulfanyl-2,3-dioxopentyl phosphate + H2O = 1,2-dihydroxy-5-(methylsulfanyl)pent-1-en-3-one + phosphate. It functions in the pathway amino-acid biosynthesis; L-methionine biosynthesis via salvage pathway; L-methionine from S-methyl-5-thio-alpha-D-ribose 1-phosphate: step 3/6. It participates in amino-acid biosynthesis; L-methionine biosynthesis via salvage pathway; L-methionine from S-methyl-5-thio-alpha-D-ribose 1-phosphate: step 4/6. Bifunctional enzyme that catalyzes the enolization of 2,3-diketo-5-methylthiopentyl-1-phosphate (DK-MTP-1-P) into the intermediate 2-hydroxy-3-keto-5-methylthiopentenyl-1-phosphate (HK-MTPenyl-1-P), which is then dephosphorylated to form the acireductone 1,2-dihydroxy-3-keto-5-methylthiopentene (DHK-MTPene). This is Enolase-phosphatase E1 from Lodderomyces elongisporus (strain ATCC 11503 / CBS 2605 / JCM 1781 / NBRC 1676 / NRRL YB-4239) (Yeast).